We begin with the raw amino-acid sequence, 368 residues long: UDP-N-acetylglucosamine--N-acetylmuramyl-(pentapeptide) pyrophosphoryl-undecaprenol N-acetylglucosamine transferase (368 aa).

UDP-N-acetyl-alpha-D-glucosamine contacts are provided by residues 10 to 12 (TGG), asparagine 124, serine 196, isoleucine 251, and glutamine 296.

Belongs to the glycosyltransferase 28 family. MurG subfamily.

The protein resides in the cell membrane. The catalysed reaction is Mur2Ac(oyl-L-Ala-gamma-D-Glu-L-Lys-D-Ala-D-Ala)-di-trans,octa-cis-undecaprenyl diphosphate + UDP-N-acetyl-alpha-D-glucosamine = beta-D-GlcNAc-(1-&gt;4)-Mur2Ac(oyl-L-Ala-gamma-D-Glu-L-Lys-D-Ala-D-Ala)-di-trans,octa-cis-undecaprenyl diphosphate + UDP + H(+). The protein operates within cell wall biogenesis; peptidoglycan biosynthesis. In terms of biological role, cell wall formation. Catalyzes the transfer of a GlcNAc subunit on undecaprenyl-pyrophosphoryl-MurNAc-pentapeptide (lipid intermediate I) to form undecaprenyl-pyrophosphoryl-MurNAc-(pentapeptide)GlcNAc (lipid intermediate II). The chain is UDP-N-acetylglucosamine--N-acetylmuramyl-(pentapeptide) pyrophosphoryl-undecaprenol N-acetylglucosamine transferase from Limosilactobacillus fermentum (strain NBRC 3956 / LMG 18251) (Lactobacillus fermentum).